Here is a 277-residue protein sequence, read N- to C-terminus: Caspase-3 (277 aa).

M1 carries the N-acetylmethionine modification. 2 consecutive propeptides follow at residues 1-9 and 10-28; these read MENTENSVD and SKSI…QSMD. Residues 1–10 show a composition bias toward polar residues; it reads MENTENSVDS. Positions 1-20 are disordered; the sequence is MENTENSVDSKSIKNLEPKI. At K11 the chain carries N6-acetyllysine. The segment covering 11-20 has biased composition (basic and acidic residues); the sequence is KSIKNLEPKI. A Phosphoserine modification is found at S26. Active-site residues include H121 and C163. The residue at position 163 (C163) is an S-nitrosocysteine; in inhibited form.

This sequence belongs to the peptidase C14A family. In terms of assembly, heterotetramer that consists of two anti-parallel arranged heterodimers, each one formed by a 17 kDa (p17) and a 12 kDa (p12) subunit. Interacts with BIRC6/bruce. In terms of processing, cleavage by granzyme B, caspase-6, caspase-8 and caspase-10 generates the two active subunits. Additional processing of the propeptides is likely due to the autocatalytic activity of the activated protease. Active heterodimers between the small subunit of caspase-7 protease and the large subunit of caspase-3 also occur and vice versa. Post-translationally, S-nitrosylated on its catalytic site cysteine in unstimulated cell lines and denitrosylated upon activation of the Fas apoptotic pathway, associated with an increase in intracellular caspase activity. Fas therefore activates caspase-3 not only by inducing the cleavage of the caspase zymogen to its active subunits, but also by stimulating the denitrosylation of its active site thiol. Ubiquitinated by BIRC6; this activity is inhibited by DIABLO/SMAC.

The protein resides in the cytoplasm. The catalysed reaction is Strict requirement for an Asp residue at positions P1 and P4. It has a preferred cleavage sequence of Asp-Xaa-Xaa-Asp-|- with a hydrophobic amino-acid residue at P2 and a hydrophilic amino-acid residue at P3, although Val or Ala are also accepted at this position.. Its activity is regulated as follows. Inhibited by BIRC6; following inhibition of BIRC6-caspase binding by DIABLO/SMAC, BIRC6 is subjected to caspase cleavage, leading to an increase in active caspases. Its function is as follows. Involved in the activation cascade of caspases responsible for apoptosis execution. At the onset of apoptosis, it proteolytically cleaves poly(ADP-ribose) polymerase PARP1 at a '216-Asp-|-Gly-217' bond. Cleaves and activates sterol regulatory element binding proteins (SREBPs) between the basic helix-loop-helix leucine zipper domain and the membrane attachment domain. Cleaves and activates caspase-6, -7 and -9 (CASP6, CASP7 and CASP9, respectively). Cleaves and inactivates interleukin-18 (IL18). Triggers cell adhesion in sympathetic neurons through RET cleavage. Cleaves IL-1 beta between an Asp and an Ala, releasing the mature cytokine which is involved in a variety of inflammatory processes. Cleaves and inhibits serine/threonine-protein kinase AKT1 in response to oxidative stress. Acts as an inhibitor of type I interferon production during virus-induced apoptosis by mediating cleavage of antiviral proteins CGAS, IRF3 and MAVS, thereby preventing cytokine overproduction. Also involved in pyroptosis by mediating cleavage and activation of gasdermin-E (GSDME). Cleaves XRCC4 and phospholipid scramblase proteins XKR4, XKR8 and XKR9, leading to promote phosphatidylserine exposure on apoptotic cell surface. Cleaves BIRC6 following inhibition of BIRC6-caspase binding by DIABLO/SMAC. The sequence is that of Caspase-3 (CASP3) from Pan troglodytes (Chimpanzee).